Reading from the N-terminus, the 66-residue chain is Large ribosomal subunit protein bL33c (66 aa).

The protein belongs to the bacterial ribosomal protein bL33 family.

The protein resides in the plastid. Its subcellular location is the chloroplast. The polypeptide is Large ribosomal subunit protein bL33c (Lepidium virginicum (Virginia pepperweed)).